A 430-amino-acid chain; its full sequence is Adenylosuccinate synthetase (430 aa).

GTP is bound by residues 12–18 (GDEGKGK) and 40–42 (GHT). Catalysis depends on aspartate 13, which acts as the Proton acceptor. Residues aspartate 13 and glycine 40 each coordinate Mg(2+). Residues 13–16 (DEGK), 38–41 (NAGH), threonine 128, arginine 142, glutamine 223, threonine 238, and arginine 302 each bind IMP. Histidine 41 serves as the catalytic Proton donor. 298–304 (TTTGRPR) contacts substrate. GTP contacts are provided by residues arginine 304, 330 to 332 (SID), and 412 to 414 (SVG).

Belongs to the adenylosuccinate synthetase family. As to quaternary structure, homodimer. It depends on Mg(2+) as a cofactor.

Its subcellular location is the cytoplasm. It carries out the reaction IMP + L-aspartate + GTP = N(6)-(1,2-dicarboxyethyl)-AMP + GDP + phosphate + 2 H(+). It participates in purine metabolism; AMP biosynthesis via de novo pathway; AMP from IMP: step 1/2. In terms of biological role, plays an important role in the de novo pathway of purine nucleotide biosynthesis. Catalyzes the first committed step in the biosynthesis of AMP from IMP. This Streptococcus sanguinis (strain SK36) protein is Adenylosuccinate synthetase.